The following is a 625-amino-acid chain: Sphingomyelin phosphodiesterase (625 aa).

A disordered region spans residues 1-20; it reads MPRHGVSPGQGLPRSGREQA. An N-terminal signal peptide occupies residues 1-40; the sequence is MPRHGVSPGQGLPRSGREQASDRSLGAPCLRLLWLGLALA. In terms of domain architecture, Saposin B-type spans 81–165; it reads WNLTCPTCKG…LLGSSCGHWD (85 aa). The N-linked (GlcNAc...) asparagine glycan is linked to Asn-82. Cystine bridges form between Cys-85-Cys-161, Cys-88-Cys-153, and Cys-116-Cys-127. Asn-171 is a glycosylation site (N-linked (GlcNAc...) asparagine). Residues Asp-202 and His-204 each coordinate Zn(2+). 2 cysteine pairs are disulfide-bonded: Cys-217–Cys-222 and Cys-223–Cys-246. Residues Asp-274 and Asn-314 each contribute to the Zn(2+) site. Asn-331 and Asn-391 each carry an N-linked (GlcNAc...) asparagine glycan. A disulfide bridge links Cys-381 with Cys-427. Zn(2+) contacts are provided by His-421, His-453, and His-455. An N-linked (GlcNAc...) asparagine glycan is attached at Asn-499. A Phosphoserine modification is found at Ser-504. N-linked (GlcNAc...) asparagine glycosylation occurs at Asn-516. 2 cysteine pairs are disulfide-bonded: Cys-580–Cys-584 and Cys-590–Cys-603.

This sequence belongs to the acid sphingomyelinase family. In terms of assembly, monomer. Interacts with SORT1; the interaction is required for SMPD1 targeting to lysosomes. Requires Zn(2+) as cofactor. Proteolytically processed. Mature lysosomal form arises from C-terminal proteolytic processing of pro-sphingomyelin phosphodiesterase. In terms of processing, both lysosomal and secreted forms are glycosylated but they show a differential pattern of glycosylation. Post-translationally, phosphorylated at Ser-504 by PRKCD upon stress stimuli. Phosphorylation is required for secretion. This form is generated following cleavage by CASP7 in the extracellular milieu. It shows increased activity.

It localises to the lysosome. The protein resides in the lipid droplet. The protein localises to the secreted. It is found in the extracellular space. It carries out the reaction a sphingomyelin + H2O = phosphocholine + an N-acylsphing-4-enine + H(+). The catalysed reaction is N-(octadecanoyl)-sphing-4-enine-1-phosphocholine + H2O = N-octadecanoylsphing-4-enine + phosphocholine + H(+). The enzyme catalyses a 1,2-diacyl-sn-glycero-3-phosphocholine + H2O = phosphocholine + a 1,2-diacyl-sn-glycerol + H(+). It catalyses the reaction 1,2-dihexadecanoyl-sn-glycero-3-phosphocholine + H2O = 1,2-dihexadecanoyl-sn-glycerol + phosphocholine + H(+). Hydrolysis of liposomal sphingomyelin is stimulated by incorporation of diacylglycerol (DAG), ceramide and free fatty acids into the liposomal membranes. Phosphatidylcholine hydrolysis is inhibited by incorporation of cholesterol, ceramide, DAG, monoacylglycerol and fatty acids. In terms of biological role, converts sphingomyelin to ceramide. Exists as two enzymatic forms that arise from alternative trafficking of a single protein precursor, one that is targeted to the endolysosomal compartment, whereas the other is released extracellularly. However, in response to various forms of stress, lysosomal exocytosis may represent a major source of the secretory form. In the lysosomes, converts sphingomyelin to ceramide. Plays an important role in the export of cholesterol from the intraendolysosomal membranes. Also has phospholipase C activities toward 1,2-diacylglycerolphosphocholine and 1,2-diacylglycerolphosphoglycerol. Modulates stress-induced apoptosis through the production of ceramide. Its function is as follows. When secreted, modulates cell signaling with its ability to reorganize the plasma membrane by converting sphingomyelin to ceramide. Secreted form is increased in response to stress and inflammatory mediators such as IL1B, IFNG or TNF as well as upon infection with bacteria and viruses. Produces the release of ceramide in the outer leaflet of the plasma membrane playing a central role in host defense. Ceramide reorganizes these rafts into larger signaling platforms that are required to internalize bacteria, induce apoptosis and regulate the cytokine response in infected cells. In wounded cells, the lysosomal form is released extracellularly in the presence of Ca(2+) and promotes endocytosis and plasma membrane repair. Functionally, this form is generated following cleavage by CASP7 in the extracellular milieu in response to bacterial infection. It shows increased ability to convert sphingomyelin to ceramide and promotes plasma membrane repair. Plasma membrane repair by ceramide counteracts the action of gasdermin-D (GSDMD) perforin (PRF1) pores that are formed in response to bacterial infection. This Bos taurus (Bovine) protein is Sphingomyelin phosphodiesterase (SMPD1).